The primary structure comprises 164 residues: uncharacterized protein (164 aa).

Ser-117 is subject to Phosphoserine.

This is an uncharacterized protein from Bacillus subtilis (strain 168).